Here is a 279-residue protein sequence, read N- to C-terminus: MYGYRRLRSPRDSQTEPQNDNEGETSLATTQMNPPKRRQVEQGPSTGAKKPSISGAPHLNSYQSLELPQNQQDSGTEELMIVLEQGTEVRLSLEEVILILAPETVLQLTLENTVLVIVPEHVLRSEDGLQSPVQIQYIIPSVDDFSLEFHAQDGDISDMRRENVPFSPAEEGKAAPLYQQPLMIPQANHMAGISPSFLVTPLCIPRCRAAFPQCYPLPPTPSPVGRPRPADSSFSLHGMELLCTSSLRPMPPSPSPGPQVYHRVHHRPPSRARRCLFRK.

2 disordered regions span residues 1 to 60 (MYGY…PHLN) and 247 to 270 (LRPMPPSPSPGPQVYHRVHHRPPS). Polar residues predominate over residues 15-33 (TEPQNDNEGETSLATTQMN).

Belongs to the PRR23 family.

The sequence is that of Proline-rich protein 23D1 (PRR23D1) from Homo sapiens (Human).